Consider the following 89-residue polypeptide: Small ribosomal subunit protein uS15 (89 aa).

This sequence belongs to the universal ribosomal protein uS15 family. In terms of assembly, part of the 30S ribosomal subunit. Forms a bridge to the 50S subunit in the 70S ribosome, contacting the 23S rRNA.

Functionally, one of the primary rRNA binding proteins, it binds directly to 16S rRNA where it helps nucleate assembly of the platform of the 30S subunit by binding and bridging several RNA helices of the 16S rRNA. In terms of biological role, forms an intersubunit bridge (bridge B4) with the 23S rRNA of the 50S subunit in the ribosome. The protein is Small ribosomal subunit protein uS15 of Buchnera aphidicola subsp. Schizaphis graminum (strain Sg).